The chain runs to 617 residues: Proline--tRNA ligase (617 aa).

The protein belongs to the class-II aminoacyl-tRNA synthetase family. ProS type 1 subfamily. As to quaternary structure, homodimer.

Its subcellular location is the cytoplasm. The catalysed reaction is tRNA(Pro) + L-proline + ATP = L-prolyl-tRNA(Pro) + AMP + diphosphate. Catalyzes the attachment of proline to tRNA(Pro) in a two-step reaction: proline is first activated by ATP to form Pro-AMP and then transferred to the acceptor end of tRNA(Pro). As ProRS can inadvertently accommodate and process non-cognate amino acids such as alanine and cysteine, to avoid such errors it has two additional distinct editing activities against alanine. One activity is designated as 'pretransfer' editing and involves the tRNA(Pro)-independent hydrolysis of activated Ala-AMP. The other activity is designated 'posttransfer' editing and involves deacylation of mischarged Ala-tRNA(Pro). The misacylated Cys-tRNA(Pro) is not edited by ProRS. The polypeptide is Proline--tRNA ligase (Streptococcus agalactiae serotype Ia (strain ATCC 27591 / A909 / CDC SS700)).